The primary structure comprises 218 residues: Elongation factor Ts (218 aa).

Residues 82-85 (TDFV) are involved in Mg(2+) ion dislocation from EF-Tu.

Belongs to the EF-Ts family.

Its subcellular location is the cytoplasm. Its function is as follows. Associates with the EF-Tu.GDP complex and induces the exchange of GDP to GTP. It remains bound to the aminoacyl-tRNA.EF-Tu.GTP complex up to the GTP hydrolysis stage on the ribosome. The protein is Elongation factor Ts of Prochlorococcus marinus (strain MIT 9312).